Reading from the N-terminus, the 108-residue chain is UPF0060 membrane protein YnfA (108 aa).

Residues 1-5 (MLKTT) lie on the Periplasmic side of the membrane. Residues 6–26 (LLFFVTALCEIIGCFLPWLWL) traverse the membrane as a helical segment. Over 27-30 (KRGA) the chain is Cytoplasmic. A helical membrane pass occupies residues 31-51 (SVWWLLPAAASLALFVWLLTL). Over 52–60 (HPAASGRVY) the chain is Periplasmic. The helical transmembrane segment at 61 to 81 (AAYGGVYVCTALLWLRVVDGV) threads the bilayer. Over 82–84 (RLT) the chain is Cytoplasmic. A helical transmembrane segment spans residues 85–105 (VYDWCGALIALCGMLIIVVGW). Topologically, residues 106 to 108 (GRT) are periplasmic.

The protein belongs to the UPF0060 family.

It is found in the cell inner membrane. This chain is UPF0060 membrane protein YnfA, found in Salmonella agona (strain SL483).